The primary structure comprises 143 residues: Large ribosomal subunit protein uL11 (143 aa).

Belongs to the universal ribosomal protein uL11 family. As to quaternary structure, part of the ribosomal stalk of the 50S ribosomal subunit. Interacts with L10 and the large rRNA to form the base of the stalk. L10 forms an elongated spine to which L12 dimers bind in a sequential fashion forming a multimeric L10(L12)X complex. Post-translationally, one or more lysine residues are methylated.

Forms part of the ribosomal stalk which helps the ribosome interact with GTP-bound translation factors. This is Large ribosomal subunit protein uL11 from Cellvibrio japonicus (strain Ueda107) (Pseudomonas fluorescens subsp. cellulosa).